The sequence spans 120 residues: UPF0231 protein YacL (120 aa).

This sequence belongs to the UPF0231 family.

The chain is UPF0231 protein YacL (yacL) from Shigella flexneri.